A 438-amino-acid chain; its full sequence is MNTNDIRTVKGEKSLQGTIKVPGDKSISHRSLIIGSIAEGETNIEGFLYSEDPLSTADCLRKLGVHIPEIKKDQPFTIRGLGIDGFREPKEILNCGNSGTTMRLLMGLLAGQTDRNFILTGDKSLNERPMGRVSKPLSLMGGKIYGRENGTKAPISITGNKLKGCVIGTPVASAQVKSAILLAGLNASGTTSVIEPASSRDHTERMLKAFGADIKIRGELGRNIVIKSGNNLTGQNILIPGDISSAAFWMIAASIVPESEILVKNVGLNPTRTGILHVMDEMGCDYKIIEKSTIAGEPIGSIKVKYVSNLKPFKVQGDILPKLIDEIPILTVAACFCNGVSEIKDAKELRVKETDRLKVMARQLKKFGANITEKEDGLIITGESKFHSAEVDSETDHRVSMSLAIASLLAKGSTRIARAGASNVSYPTFWDDLEKLIN.

3-phosphoshikimate contacts are provided by lysine 25, serine 26, and arginine 30. Lysine 25 serves as a coordination point for phosphoenolpyruvate. 2 residues coordinate phosphoenolpyruvate: glycine 99 and arginine 128. Residues serine 173, glutamine 175, aspartate 325, and lysine 352 each contribute to the 3-phosphoshikimate site. Glutamine 175 contacts phosphoenolpyruvate. Aspartate 325 functions as the Proton acceptor in the catalytic mechanism. Positions 356 and 398 each coordinate phosphoenolpyruvate.

It belongs to the EPSP synthase family. Monomer.

The protein resides in the cytoplasm. It catalyses the reaction 3-phosphoshikimate + phosphoenolpyruvate = 5-O-(1-carboxyvinyl)-3-phosphoshikimate + phosphate. It participates in metabolic intermediate biosynthesis; chorismate biosynthesis; chorismate from D-erythrose 4-phosphate and phosphoenolpyruvate: step 6/7. Its function is as follows. Catalyzes the transfer of the enolpyruvyl moiety of phosphoenolpyruvate (PEP) to the 5-hydroxyl of shikimate-3-phosphate (S3P) to produce enolpyruvyl shikimate-3-phosphate and inorganic phosphate. This Prochlorococcus marinus (strain MIT 9515) protein is 3-phosphoshikimate 1-carboxyvinyltransferase.